Consider the following 312-residue polypeptide: Ribosomal RNA small subunit methyltransferase H (312 aa).

S-adenosyl-L-methionine is bound by residues 34–36, D54, F81, D102, and Q109; that span reads AGH.

Belongs to the methyltransferase superfamily. RsmH family.

Its subcellular location is the cytoplasm. It carries out the reaction cytidine(1402) in 16S rRNA + S-adenosyl-L-methionine = N(4)-methylcytidine(1402) in 16S rRNA + S-adenosyl-L-homocysteine + H(+). Functionally, specifically methylates the N4 position of cytidine in position 1402 (C1402) of 16S rRNA. The protein is Ribosomal RNA small subunit methyltransferase H of Citrifermentans bemidjiense (strain ATCC BAA-1014 / DSM 16622 / JCM 12645 / Bem) (Geobacter bemidjiensis).